A 156-amino-acid polypeptide reads, in one-letter code: Small ribosomal subunit protein uS7 (156 aa).

This sequence belongs to the universal ribosomal protein uS7 family. In terms of assembly, part of the 30S ribosomal subunit. Contacts proteins S9 and S11.

One of the primary rRNA binding proteins, it binds directly to 16S rRNA where it nucleates assembly of the head domain of the 30S subunit. Is located at the subunit interface close to the decoding center, probably blocks exit of the E-site tRNA. This is Small ribosomal subunit protein uS7 from Phytoplasma australiense.